A 289-amino-acid polypeptide reads, in one-letter code: Probable porphobilinogen deaminase (289 aa).

The residue at position 233 (Cys-233) is an S-(dipyrrolylmethanemethyl)cysteine.

This sequence belongs to the HMBS family. It depends on dipyrromethane as a cofactor.

It catalyses the reaction 4 porphobilinogen + H2O = hydroxymethylbilane + 4 NH4(+). It participates in porphyrin-containing compound metabolism; protoporphyrin-IX biosynthesis; coproporphyrinogen-III from 5-aminolevulinate: step 2/4. Its function is as follows. Tetrapolymerization of the monopyrrole PBG into the hydroxymethylbilane pre-uroporphyrinogen in several discrete steps. This Methanothermobacter thermautotrophicus (strain ATCC 29096 / DSM 1053 / JCM 10044 / NBRC 100330 / Delta H) (Methanobacterium thermoautotrophicum) protein is Probable porphobilinogen deaminase (hemC).